Reading from the N-terminus, the 668-residue chain is Potassium voltage-gated channel subfamily KQT member 1 (668 aa).

The Cytoplasmic portion of the chain corresponds to 1 to 119; the sequence is MDTASSPPSA…YNFLERPTGW (119 aa). Ser27 is modified (phosphoserine; by PKA). The helical transmembrane segment at 120 to 141 threads the bilayer; sequence KCFVYHFTVFLIVLVCLIFSVL. Topologically, residues 142 to 152 are extracellular; the sequence is STIEQYAALAT. The helical transmembrane segment at 153 to 175 threads the bilayer; it reads GTLFWMEIVLVVFFGTEYVVRLW. At 176–191 the chain is on the cytoplasmic side; it reads SAGCRSKYVGIWGRLR. Residues 192–217 form a helical membrane-spanning segment; the sequence is FARKPISIIDLIVVVASMVVLCVGSK. Over 218–225 the chain is Extracellular; it reads GQVFATSA. Residues 226 to 241 traverse the membrane as a helical; Voltage-sensor segment; sequence IRGIRFLQILRMLHVD. The segment at 237–245 is interaction with KCNE3; that stretch reads MLHVDRQGG. Residues 242–259 are Cytoplasmic-facing; the sequence is RQGGTWRLLGSVVFIHRQ. Gln243 is a binding site for a 1,2-diacyl-sn-glycero-3-phospho-(1D-myo-inositol-4,5-bisphosphate). The chain crosses the membrane as a helical span at residues 260–282; it reads ELITTLYIGFLGLIFSSYFVYLA. At 283 to 298 the chain is on the extracellular side; it reads EKDAVNESGRIEFGSY. A glycan (N-linked (GlcNAc...) asparagine) is linked at Asn288. The segment at residues 299–319 is an intramembrane region (pore-forming); that stretch reads ADALWWGVVTVTTIGYGDKVP. Residues 320 to 321 are Extracellular-facing; that stretch reads QT. The helical transmembrane segment at 322–347 threads the bilayer; the sequence is WVGKTIASCFSVFAISFFALPAGILG. The Cytoplasmic portion of the chain corresponds to 348–668; it reads SGFALKVQQK…VPQTGPDEGS (321 aa). Positions 369–381 are interaction with CALM; sequence AAASLIQTAWRCY. Phosphoserine is present on residues Ser406 and Ser408. Positions 514–528 are interaction with CALM; calcium-dependent; that stretch reads KVIRRMQYFVAKKKF. An interaction with KCNE1 C-terminus region spans residues 534-571; that stretch reads PYDVRDVIEQYSQGHLNLMVRIKELQRRLDQSIGKPSL. Residues 584-620 adopt a coiled-coil conformation; the sequence is SNTIGARLNRVEDKVTQLDQRLVIITDMLHQLLSMQQ. The tract at residues 587–615 is interaction with AKAP9; that stretch reads IGARLNRVEDKVTQLDQRLVIITDMLHQL. The segment at 588–619 is C-terminal assembly domain (tetramerization); that stretch reads GARLNRVEDKVTQLDQRLVIITDMLHQLLSMQ.

This sequence belongs to the potassium channel family. KQT (TC 1.A.1.15) subfamily. Kv7.1/KCNQ1 sub-subfamily. In terms of assembly, tetramer. Heterotetramer with KCNE1; form the native cardiac channel I(Ks) which increases the amplitude and slows down the activation kinetics of outward potassium current and targets to the membrane raft. Interacts (via C-terminus) with CALM; forms a heterooctameric structure (with 4:4 KCNQ1:CALM stoichiometry) in a calcium-independent manner. Interacts with AKAP9; targets protein kinase A (PKA) catalytic and regulatory subunits and protein phosphatase 1 (PP1) to the KCNQ1-KCNE1 complex, allowing PKA-mediated phosphorylation and increase of delayed rectifier potassium channel activity. Interacts with KCNE2; form an heterooligomer complex that targets to the membrane raft and leading to currents with an apparently instantaneous activation, a rapid deactivation process and a linear current-voltage relationship and decreases the amplitude of the outward current. Interacts with AP2M1; mediates estrogen-induced internalization via clathrin-coated vesicles. Interacts with NEDD4L; promotes internalization and decreases I(Ks) currents. Interacts with USP2; counteracts the NEDD4L-specific down-regulation of I(Ks) and restore plasma membrane localization. Heterotetramer with KCNQ5; has a voltage-gated potassium channel activity. Interacts with KCNE3; four KCNE3 molecules are bound to one KCNQ1 tetramer (4:4 KCNQ1:KCNE3 stoichiometry); alters membrane raft localization; affects KCNQ1 structure and gating properties. Interacts with KCNE4; impairs KCNQ1 localization in lipid rafts and inhibits voltage-gated potassium channel activity. Interacts with KCNE5; impairs KCNQ1 localization in lipid rafts and only conducts current upon strong and continued depolarization. Interacts with SLC5A3; forms coregulatory channel-transporter complexes that modulate Na(+)-coupled myo-inositol influx through the transporter. Phosphorylation at Ser-27 by PKA; increases delayed rectifier potassium channel activity of the KCNQ1-KCNE1 complex through a macromolecular complex that includes PKA, PP1, and the targeting protein AKAP9. In terms of processing, ubiquitinated by NEDD4L; promotes internalization. The ubiquitinylated form is internalized through a clathrin-mediated endocytosis by interacting with AP2M1 and is recycled back to the cell membrane via RAB4A and RAB11A. Post-translationally, deubiquitinated by USP2; counteracts the NEDD4L-specific down-regulation of I(Ks) and restores the membrane localization. As to expression, expressed in heart, kidney and salivary glands. Detected in the cochlea. Almost undetectable in brain, skeletal muscle and liver. Widely expressed in embryonic and neonatal tissues. Expressed in choroid plexus epithelium (at protein level).

Its subcellular location is the cell membrane. It is found in the cytoplasmic vesicle membrane. The protein resides in the early endosome. It localises to the membrane raft. The protein localises to the endoplasmic reticulum. Its subcellular location is the basolateral cell membrane. It is found in the apical cell membrane. It carries out the reaction K(+)(in) = K(+)(out). Its activity is regulated as follows. PIP2 molecule is essential to activate KCNQ channels by inducing the coupling of the voltage-sensing domain (VSD) and the pore-forming domain (PD). Upon channel activation, PIP2 disrupts the VSD-calmodulin/CALM interactions, causing the release of CALM from the VSD which triggers the opening of the gate. Calcium potentiates KCNQ1 channel current through calcium-bound CALM. Calcium-bound CALM competes with PIP2 to stabilize the channel open state. Functionally, pore-forming subunit of the voltage-gated potassium (Kv) channel involved in the regulation of cardiomyocyte excitability and important in normal development and functions of myocardium, inner ear, stomach and colon. Associates with KCNE beta subunits that modulates current kinetics. Induces a voltage-dependent by rapidly activating and slowly deactivating potassium-selective outward current. Also promotes a delayed voltage activated potassium current showing outward rectification characteristic. During beta-adrenergic receptor stimulation participates in cardiac increases the amplitude and slows down the activation kinetics of outward potassium current I(Ks). Muscarinic agonist oxotremorine-M strongly suppresses KCNQ1/KCNE1 current. When associated with KCNE3, forms the potassium channel that is important for cyclic AMP-stimulated intestinal secretion of chloride ions. This interaction with KCNE3 is reduced by 17beta-estradiol, resulting in the reduction of currents. During conditions of increased substrate load, maintains the driving force for proximal tubular and intestinal sodium ions absorption, gastric acid secretion, and cAMP-induced jejunal chloride ions secretion. Allows the provision of potassium ions to the luminal membrane of the secretory canaliculus in the resting state as well as during stimulated acid secretion. When associated with KCNE2, forms a heterooligomer complex leading to currents with an apparently instantaneous activation, a rapid deactivation process and a linear current-voltage relationship and decreases the amplitude of the outward current. When associated with KCNE4, inhibits voltage-gated potassium channel activity. When associated with KCNE5, this complex only conducts current upon strong and continued depolarization. Also forms a heterotetramer with KCNQ5; has a voltage-gated potassium channel activity. Binds with phosphatidylinositol 4,5-bisphosphate. KCNQ1-KCNE2 channel associates with Na(+)-coupled myo-inositol symporter in the apical membrane of choroid plexus epithelium and regulates the myo-inositol gradient between blood and cerebrospinal fluid with an impact on neuron excitability. The sequence is that of Potassium voltage-gated channel subfamily KQT member 1 from Mus musculus (Mouse).